Consider the following 1066-residue polypeptide: Bifunctional cytochrome P450/NADPH--P450 reductase (1066 aa).

Positions 1-480 (MAESVPIPEP…LAGNGATSSS (480 aa)) are cytochrome P450. Cys-407 provides a ligand contact to heme. The tract at residues 481–1066 (THNIKAAANL…NERFATDVFD (586 aa)) is NADPH-P-450 reductase. The region spanning 500-641 (MAIFYGSNSG…DFEAWEDIVL (142 aa)) is the Flavodoxin-like domain. Residues 506–511 (SNSGTC), 554–557 (SYEG), Cys-588, and Thr-596 each bind FMN. The 229-residue stretch at 676 to 904 (QDVEEALVVA…RASSEAFHLP (229 aa)) folds into the FAD-binding FR-type domain.

The protein in the N-terminal section; belongs to the cytochrome P450 family. FAD is required as a cofactor. The cofactor is FMN. Requires heme as cofactor.

It is found in the membrane. The catalysed reaction is an organic molecule + reduced [NADPH--hemoprotein reductase] + O2 = an alcohol + oxidized [NADPH--hemoprotein reductase] + H2O + H(+). It catalyses the reaction 2 oxidized [cytochrome P450] + NADPH = 2 reduced [cytochrome P450] + NADP(+) + H(+). Stimulated NADPH--cytochrome reductase activity in the presence of substrate. Inhibited by fatty acid substrates longer than 13 carbons and the degree of inhibition increases with increasing chain length. Its function is as follows. Functions as a fatty acid monooxygenase. Catalyzes hydroxylation of fatty acids at omega-1, omega-2 and omega-3 positions. Shows activity toward fatty acids with a chain length of 9-18 carbons with optimum chain lengths of 12-14 carbons (lauric, tridecylic and myristic acids). Can also use shorter saturated fatty acids with a chain length of 9 or 10 carbons as substrates. Also displays a NADPH-dependent reductase activity in the C-terminal domain, which allows electron transfer from NADPH to the heme iron of the cytochrome P450 N-terminal domain. The sequence is that of Bifunctional cytochrome P450/NADPH--P450 reductase from Fusarium oxysporum (Fusarium vascular wilt).